Reading from the N-terminus, the 103-residue chain is Histone H4 variant TH091 (103 aa).

The segment at 1 to 20 (MSGRDKGGKGLGKGGAKRHR) is disordered. Ser2 carries the N-acetylserine modification. N6-acetyllysine is present on residues Lys6, Lys9, Lys13, Lys17, and Lys21. Residues 17 to 21 (KRHRK) mediate DNA binding.

It belongs to the histone H4 family. In terms of assembly, the nucleosome is a histone octamer containing two molecules each of H2A, H2B, H3 and H4 assembled in one H3-H4 heterotetramer and two H2A-H2B heterodimers. The octamer wraps approximately 147 bp of DNA.

It is found in the nucleus. The protein resides in the chromosome. In terms of biological role, core component of nucleosome. Nucleosomes wrap and compact DNA into chromatin, limiting DNA accessibility to the cellular machineries which require DNA as a template. Histones thereby play a central role in transcription regulation, DNA repair, DNA replication and chromosomal stability. DNA accessibility is regulated via a complex set of post-translational modifications of histones, also called histone code, and nucleosome remodeling. The chain is Histone H4 variant TH091 from Triticum aestivum (Wheat).